The sequence spans 526 residues: 3',5'-cyclic-nucleotide phosphodiesterase 2 (526 aa).

The 345-residue stretch at 182-526 (RNIEFMSFLS…EYWMKHKKPQ (345 aa)) folds into the PDEase domain. Residue histidine 265 is the Proton donor of the active site. A divalent metal cation-binding residues include histidine 269, histidine 302, aspartate 303, and aspartate 400.

It belongs to the cyclic nucleotide phosphodiesterase family. Monomer. A divalent metal cation serves as cofactor.

It carries out the reaction 3',5'-cyclic AMP + H2O = AMP + H(+). Controls the level of cAMP in yeast cells, together with the low-affinity cAMP phosphodiesterase (PDE1). This chain is 3',5'-cyclic-nucleotide phosphodiesterase 2, found in Saccharomyces cerevisiae (strain ATCC 204508 / S288c) (Baker's yeast).